The chain runs to 376 residues: Lipoyl synthase 1, mitochondrial (376 aa).

7 residues coordinate [4Fe-4S] cluster: C109, C114, C120, C140, C144, C147, and S356. Residues 125–345 (ETGTATATIM…QTLGMEMGFR (221 aa)) form the Radical SAM core domain.

Belongs to the radical SAM superfamily. Lipoyl synthase family. It depends on [4Fe-4S] cluster as a cofactor.

It is found in the mitochondrion. The catalysed reaction is [[Fe-S] cluster scaffold protein carrying a second [4Fe-4S](2+) cluster] + N(6)-octanoyl-L-lysyl-[protein] + 2 oxidized [2Fe-2S]-[ferredoxin] + 2 S-adenosyl-L-methionine + 4 H(+) = [[Fe-S] cluster scaffold protein] + N(6)-[(R)-dihydrolipoyl]-L-lysyl-[protein] + 4 Fe(3+) + 2 hydrogen sulfide + 2 5'-deoxyadenosine + 2 L-methionine + 2 reduced [2Fe-2S]-[ferredoxin]. It participates in protein modification; protein lipoylation via endogenous pathway; protein N(6)-(lipoyl)lysine from octanoyl-[acyl-carrier-protein]: step 2/2. Functionally, catalyzes the radical-mediated insertion of two sulfur atoms into the C-6 and C-8 positions of the octanoyl moiety bound to the lipoyl domains of lipoate-dependent enzymes, thereby converting the octanoylated domains into lipoylated derivatives. This is Lipoyl synthase 1, mitochondrial from Pisum sativum (Garden pea).